The chain runs to 30 residues: Unknown protein from spot 365 of 2D-PAGE of etiolated coleoptile (30 aa).

It belongs to the zinc-containing alcohol dehydrogenase family.

The chain is Unknown protein from spot 365 of 2D-PAGE of etiolated coleoptile from Zea mays (Maize).